The following is a 287-amino-acid chain: 2-dehydro-3-deoxyphosphooctonate aldolase (287 aa).

This sequence belongs to the KdsA family.

The protein localises to the cytoplasm. It catalyses the reaction D-arabinose 5-phosphate + phosphoenolpyruvate + H2O = 3-deoxy-alpha-D-manno-2-octulosonate-8-phosphate + phosphate. Its pathway is carbohydrate biosynthesis; 3-deoxy-D-manno-octulosonate biosynthesis; 3-deoxy-D-manno-octulosonate from D-ribulose 5-phosphate: step 2/3. It participates in bacterial outer membrane biogenesis; lipopolysaccharide biosynthesis. The polypeptide is 2-dehydro-3-deoxyphosphooctonate aldolase (Rhodopseudomonas palustris (strain BisB5)).